The following is a 290-amino-acid chain: 4-diphosphocytidyl-2-C-methyl-D-erythritol kinase (290 aa).

The active site involves K8. 92-102 serves as a coordination point for ATP; sequence PISAGLAGGST. D134 is a catalytic residue.

This sequence belongs to the GHMP kinase family. IspE subfamily.

It carries out the reaction 4-CDP-2-C-methyl-D-erythritol + ATP = 4-CDP-2-C-methyl-D-erythritol 2-phosphate + ADP + H(+). The protein operates within isoprenoid biosynthesis; isopentenyl diphosphate biosynthesis via DXP pathway; isopentenyl diphosphate from 1-deoxy-D-xylulose 5-phosphate: step 3/6. Catalyzes the phosphorylation of the position 2 hydroxy group of 4-diphosphocytidyl-2C-methyl-D-erythritol. The polypeptide is 4-diphosphocytidyl-2-C-methyl-D-erythritol kinase (Caldicellulosiruptor saccharolyticus (strain ATCC 43494 / DSM 8903 / Tp8T 6331)).